An 801-amino-acid polypeptide reads, in one-letter code: Phosphatidylinositol 3-kinase pik3 (801 aa).

The C2 PI3K-type domain maps to 14 to 166 (VTARFLVKFC…RLDGLLLKLQ (153 aa)). In terms of domain architecture, PIK helical spans 257–439 (DKDLKPNSKI…SSVMFLFQKE (183 aa)). One can recognise a PI3K/PI4K catalytic domain in the interval 515–785 (IPDACTVFKS…LINDSVSALF (271 aa)). The interval 521-527 (VFKSTMQ) is G-loop. The tract at residues 654–662 (GVGDRHLDN) is catalytic loop. An activation loop region spans residues 673 to 694 (HADFGYILGRDPKLFSPAMKLS).

This sequence belongs to the PI3/PI4-kinase family. As to quaternary structure, component of the autophagy-specific vps34 PI3-kinase complex I composed of vps15, atg6, pik3/vps34, atg14 and atg38. Also a component of the VPS34 PI3-kinase complex II composed of atg6, pik3, vps15 and vps38.

It carries out the reaction a 1,2-diacyl-sn-glycero-3-phospho-(1D-myo-inositol) + ATP = a 1,2-diacyl-sn-glycero-3-phospho-(1D-myo-inositol-3-phosphate) + ADP + H(+). Functionally, phosphatidylinositol 3-kinase that functions as a part of the autophagy-specific VPS34 PI3-kinase complex I that plays a role in autophagosome assembly. This complex is essential to recruit the atg8-phosphatidylinositol conjugate and the atg12-atg5 conjugate to the pre-autophagosomal structure. Also functions as part of the VPS34 PI3-kinase complex II. This Schizosaccharomyces pombe (strain 972 / ATCC 24843) (Fission yeast) protein is Phosphatidylinositol 3-kinase pik3 (pik3).